Reading from the N-terminus, the 579-residue chain is Protein inscuteable homolog (579 aa).

The segment at 74 to 89 is important for interaction with GPSM2; sequence SVQRWMEDLKLMTECE. Positions 576–579 match the PDZ-binding motif; the sequence is ESFV.

Interacts with ALS2CR19/PAR3B and GPSM1/AGS3. Interacts with F2RL2/PAR3. Interacts with GPSM2/LGN (via TPR repeat region). Expressed in brain, kidney, liver, testis and skin.

It is found in the cytoplasm. Its subcellular location is the cell cortex. In terms of biological role, may function as an adapter linking the Par3 complex to the GPSM1/GPSM2 complex. Involved in spindle orientation during mitosis. May regulate cell proliferation and differentiation in the developing nervous system. May play a role in the asymmetric division of fibroblasts and participate in the process of stratification of the squamous epithelium. The protein is Protein inscuteable homolog (Insc) of Mus musculus (Mouse).